Here is a 575-residue protein sequence, read N- to C-terminus: Adenine deaminase (575 aa).

The protein belongs to the metallo-dependent hydrolases superfamily. Adenine deaminase family. Mn(2+) is required as a cofactor.

It catalyses the reaction adenine + H2O + H(+) = hypoxanthine + NH4(+). The chain is Adenine deaminase from Nitratidesulfovibrio vulgaris (strain DP4) (Desulfovibrio vulgaris).